Here is a 119-residue protein sequence, read N- to C-terminus: DNA-directed RNA polymerase subunit omega (119 aa).

This sequence belongs to the RNA polymerase subunit omega family. In terms of assembly, the RNAP catalytic core consists of 2 alpha, 1 beta, 1 beta' and 1 omega subunit. When a sigma factor is associated with the core the holoenzyme is formed, which can initiate transcription.

The catalysed reaction is RNA(n) + a ribonucleoside 5'-triphosphate = RNA(n+1) + diphosphate. Promotes RNA polymerase assembly. Latches the N- and C-terminal regions of the beta' subunit thereby facilitating its interaction with the beta and alpha subunits. This chain is DNA-directed RNA polymerase subunit omega, found in Caulobacter sp. (strain K31).